Here is a 466-residue protein sequence, read N- to C-terminus: MSTEKDYVVADIGLADFGRKEITIAETEMPGLMSCRTEFGQAKPLKGARITGSLHMTIQTAVLIETLVALGAEVRWASCNIFSTQDHAAAAIAAAGVPVFAIKGESLEDYWVYTDKIFQWADGGLSNMILDDGGDATMYILLGARAEAGEDVLSHPHSEEEEILFAQIKKRLAASPGWFTKQRDAIKGVTEETTTGVNRLYQLSQKGLLPFPAINVNDSVTKSKFDNKYGCKESLVDGIRRGTDVMMAGKVAVVCGYGDVGKGSAASLSGAGARVKVTEADPICALQAAMDGYEVVLLEDVVSSADIFITTTGNKDVIRIDHMRQMKDMAIVGNIGHFDNEIEVAALRNLKWTNVKPQVDLIEFPKGNRIILLSEGRLLNLGNATGHPSFVMSASFTNQTLAQIELFTKPDQYSNQVYILPKHLDEKVARLHLDKLGVKLTQLSEEQAAYIGVSPKGPFKSDHYRY.

Residues threonine 57, aspartate 132, and glutamate 192 each coordinate substrate. 193–195 (TTT) is an NAD(+) binding site. Substrate is bound by residues lysine 222 and aspartate 226. Residues asparagine 227, 256–261 (GYGDVG), glutamate 279, asparagine 314, 335–337 (IGH), and asparagine 380 contribute to the NAD(+) site.

The protein belongs to the adenosylhomocysteinase family. It depends on NAD(+) as a cofactor.

It localises to the cytoplasm. The catalysed reaction is S-adenosyl-L-homocysteine + H2O = L-homocysteine + adenosine. It participates in amino-acid biosynthesis; L-homocysteine biosynthesis; L-homocysteine from S-adenosyl-L-homocysteine: step 1/1. Functionally, may play a key role in the regulation of the intracellular concentration of adenosylhomocysteine. The sequence is that of Adenosylhomocysteinase from Rhizobium leguminosarum bv. trifolii (strain WSM2304).